Consider the following 501-residue polypeptide: Fumarate reductase 2 (501 aa).

Residues 1–32 constitute a mitochondrion transit peptide; it reads MIRSVRRVFIYVSIFVLIIVLKRTLSGTDQTS. 37–51 serves as a coordination point for FAD; that stretch reads VVVIGSGLAGLTTSN. Residues H281 and R304 contribute to the active site.

The protein belongs to the FAD-dependent oxidoreductase 2 family. FRD/SDH subfamily. FAD is required as a cofactor.

Its subcellular location is the mitochondrion. The enzyme catalyses succinate + NAD(+) = fumarate + NADH + H(+). Irreversibly catalyzes the reduction of fumarate to succinate. Together with the second isozyme of soluble fumarate reductase (FRD1), essential for anaerobic growth. Involved in maintaining redox balance during oxygen deficiency conditions. Reduction of fumarate is the main source of succinate during fermentation, and under anaerobic conditions, the formation of succinate is strictly required for the reoxidation of FADH(2). The sequence is that of Fumarate reductase 2 (OSM1) from Saccharomyces cerevisiae (strain ATCC 204508 / S288c) (Baker's yeast).